The sequence spans 412 residues: Arginine biosynthesis bifunctional protein ArgJ (412 aa).

The substrate site is built by T158, K184, T195, E284, N407, and S412. T195 serves as the catalytic Nucleophile.

The protein belongs to the ArgJ family. In terms of assembly, heterotetramer of two alpha and two beta chains.

It is found in the cytoplasm. It carries out the reaction N(2)-acetyl-L-ornithine + L-glutamate = N-acetyl-L-glutamate + L-ornithine. The enzyme catalyses L-glutamate + acetyl-CoA = N-acetyl-L-glutamate + CoA + H(+). It participates in amino-acid biosynthesis; L-arginine biosynthesis; L-ornithine and N-acetyl-L-glutamate from L-glutamate and N(2)-acetyl-L-ornithine (cyclic): step 1/1. The protein operates within amino-acid biosynthesis; L-arginine biosynthesis; N(2)-acetyl-L-ornithine from L-glutamate: step 1/4. Catalyzes two activities which are involved in the cyclic version of arginine biosynthesis: the synthesis of N-acetylglutamate from glutamate and acetyl-CoA as the acetyl donor, and of ornithine by transacetylation between N(2)-acetylornithine and glutamate. This is Arginine biosynthesis bifunctional protein ArgJ from Bartonella quintana (strain Toulouse) (Rochalimaea quintana).